A 103-amino-acid polypeptide reads, in one-letter code: Small ribosomal subunit protein uS10 (103 aa).

This sequence belongs to the universal ribosomal protein uS10 family. Part of the 30S ribosomal subunit.

Functionally, involved in the binding of tRNA to the ribosomes. The protein is Small ribosomal subunit protein uS10 of Pelodictyon phaeoclathratiforme (strain DSM 5477 / BU-1).